Reading from the N-terminus, the 244-residue chain is 5-oxoprolinase subunit A (244 aa).

It belongs to the LamB/PxpA family. In terms of assembly, forms a complex composed of PxpA, PxpB and PxpC.

The enzyme catalyses 5-oxo-L-proline + ATP + 2 H2O = L-glutamate + ADP + phosphate + H(+). In terms of biological role, catalyzes the cleavage of 5-oxoproline to form L-glutamate coupled to the hydrolysis of ATP to ADP and inorganic phosphate. The polypeptide is 5-oxoprolinase subunit A (Salmonella arizonae (strain ATCC BAA-731 / CDC346-86 / RSK2980)).